A 218-amino-acid polypeptide reads, in one-letter code: Capsid protein (218 aa).

The residue at position 1 (methionine 1) is an N-acetylmethionine; by host. The segment covering 1-10 (MDKSESTSAG) has biased composition (low complexity). Positions 1–30 (MDKSESTSAGRNRRRRPRRGSRSASSSADA) are disordered. A compositionally biased stretch (basic residues) spans 11-21 (RNRRRRPRRGS).

Belongs to the cucumovirus capsid protein family.

It localises to the virion. In terms of biological role, capsid protein. Probably binds RNA and plays a role in packaging. This chain is Capsid protein, found in Cucumber mosaic virus (strain P6) (CMV).